Here is a 100-residue protein sequence, read N- to C-terminus: Integration host factor subunit alpha (100 aa).

Residues 53–72 are disordered; the sequence is FQLRDKPQRPGRNPKTGEEV.

Belongs to the bacterial histone-like protein family. As to quaternary structure, heterodimer of an alpha and a beta chain.

Functionally, this protein is one of the two subunits of integration host factor, a specific DNA-binding protein that functions in genetic recombination as well as in transcriptional and translational control. This chain is Integration host factor subunit alpha, found in Neisseria gonorrhoeae (strain ATCC 700825 / FA 1090).